The following is a 312-amino-acid chain: Probable cell division protein WhiA (312 aa).

A DNA-binding region (H-T-H motif) is located at residues 274-308 (SLKELGTLVPGGPISKSGVNHRLRKLNAYADELRQ).

This sequence belongs to the WhiA family.

In terms of biological role, involved in cell division and chromosome segregation. The chain is Probable cell division protein WhiA from Limosilactobacillus fermentum (strain NBRC 3956 / LMG 18251) (Lactobacillus fermentum).